A 171-amino-acid chain; its full sequence is Shikimate kinase (171 aa).

14–19 contributes to the ATP binding site; the sequence is GAGKST. Position 18 (Ser18) interacts with Mg(2+). Substrate contacts are provided by Asp36, Arg60, and Gly82. Arg120 is an ATP binding site. Substrate is bound at residue Arg139. Residue Gln156 participates in ATP binding.

It belongs to the shikimate kinase family. Monomer. It depends on Mg(2+) as a cofactor.

The protein localises to the cytoplasm. The catalysed reaction is shikimate + ATP = 3-phosphoshikimate + ADP + H(+). It participates in metabolic intermediate biosynthesis; chorismate biosynthesis; chorismate from D-erythrose 4-phosphate and phosphoenolpyruvate: step 5/7. Functionally, catalyzes the specific phosphorylation of the 3-hydroxyl group of shikimic acid using ATP as a cosubstrate. The chain is Shikimate kinase from Shewanella oneidensis (strain ATCC 700550 / JCM 31522 / CIP 106686 / LMG 19005 / NCIMB 14063 / MR-1).